We begin with the raw amino-acid sequence, 365 residues long: MPVNMVSASEYRRILVSDHPIMDARAPVEFTKGAFPASRNHPLMEDEERRLVGTCYKQNGQQAAIDLGHSLVTGEIKQQRLDAWQRYFTKHPDAYLYCFRGGLRSKLTQQWLKEAGIDVPFIEGGYKAMRQFLIETIDNAASQNPMLILSGITGSGKTDFLLARNDSVDLEGIAHHRGSSFGRYHEPQPTQINFENALAVALLKHQDSQAKHLLLEDESFLIGRSALPQAFYKGMQQANVVVLEEPMEARLTRLLNEYVHKMHSGYIQRLGEEAGFAAFAEYLALSITGIKKRLGGKQHDEFQAIITNALNIQQSRGDTSAHIEWIELLLSKYYDPMYQYQIDKKAERILFKGDHLAMHQWLDAN.

One can recognise a Rhodanese domain in the interval leucine 15–aspartate 138. Cysteine 98 (S-selanylcysteine intermediate) is an active-site residue.

Belongs to the SelU family. Monomer.

It carries out the reaction 5-methylaminomethyl-2-thiouridine(34) in tRNA + selenophosphate + (2E)-geranyl diphosphate + H2O + H(+) = 5-methylaminomethyl-2-selenouridine(34) in tRNA + (2E)-thiogeraniol + phosphate + diphosphate. It catalyses the reaction 5-methylaminomethyl-2-thiouridine(34) in tRNA + (2E)-geranyl diphosphate = 5-methylaminomethyl-S-(2E)-geranyl-thiouridine(34) in tRNA + diphosphate. The catalysed reaction is 5-methylaminomethyl-S-(2E)-geranyl-thiouridine(34) in tRNA + selenophosphate + H(+) = 5-methylaminomethyl-2-(Se-phospho)selenouridine(34) in tRNA + (2E)-thiogeraniol. The enzyme catalyses 5-methylaminomethyl-2-(Se-phospho)selenouridine(34) in tRNA + H2O = 5-methylaminomethyl-2-selenouridine(34) in tRNA + phosphate. In terms of biological role, involved in the post-transcriptional modification of the uridine at the wobble position (U34) of tRNA(Lys), tRNA(Glu) and tRNA(Gln). Catalyzes the conversion of 2-thiouridine (S2U-RNA) to 2-selenouridine (Se2U-RNA). Acts in a two-step process involving geranylation of 2-thiouridine (S2U) to S-geranyl-2-thiouridine (geS2U) and subsequent selenation of the latter derivative to 2-selenouridine (Se2U) in the tRNA chain. This is tRNA 2-selenouridine synthase from Shewanella piezotolerans (strain WP3 / JCM 13877).